The chain runs to 453 residues: O-methyltransferase bik3 (453 aa).

The tract at residues Met-1–Asn-25 is disordered. Low complexity predominate over residues Asn-8–Asn-25. An S-adenosyl-L-methionine-binding site is contributed by Asp-305. His-355 functions as the Proton acceptor in the catalytic mechanism.

The protein belongs to the class I-like SAM-binding methyltransferase superfamily. Cation-independent O-methyltransferase family. COMT subfamily.

It functions in the pathway secondary metabolite biosynthesis. Its function is as follows. O-methyltransferase; part of the gene cluster that mediates the biosynthesis of bikaverin, a red pigment also considered as a mycotoxin. The first stage is catalyzed by the polyketide synthase bik1, which catalyzes the formation of the intermediate SMA76a also knowm as pre-bikaverin. FAD-dependent monooxygenase bik2 might then be responsible for the oxidation of pre-bikaverin to oxo-pre-bikaverin which is in turn methylated by the O-methyltransferase bik3 to me-oxo-pre-bikaverin. A further cycle of oxydation and methylation by bik2 and bik3 leads to the final product of bikaverin, via a nor-bikaverin intermediate. This chain is O-methyltransferase bik3, found in Gibberella fujikuroi (strain CBS 195.34 / IMI 58289 / NRRL A-6831) (Bakanae and foot rot disease fungus).